Here is a 24-residue protein sequence, read N- to C-terminus: Brevinin-1La (24 aa).

Cysteines 18 and 24 form a disulfide.

Expressed by the skin glands.

The protein localises to the secreted. In terms of biological role, antibacterial activity against Gram-positive bacterium S.aureus and Gram-negative bacterium E.coli. The polypeptide is Brevinin-1La (Rana luteiventris (Columbia spotted frog)).